The sequence spans 497 residues: Probable cytosol aminopeptidase (497 aa).

2 residues coordinate Mn(2+): K267 and D272. K279 is a catalytic residue. Residues D290, D349, and E351 each coordinate Mn(2+). R353 is an active-site residue.

It belongs to the peptidase M17 family. Requires Mn(2+) as cofactor.

Its subcellular location is the cytoplasm. It catalyses the reaction Release of an N-terminal amino acid, Xaa-|-Yaa-, in which Xaa is preferably Leu, but may be other amino acids including Pro although not Arg or Lys, and Yaa may be Pro. Amino acid amides and methyl esters are also readily hydrolyzed, but rates on arylamides are exceedingly low.. The catalysed reaction is Release of an N-terminal amino acid, preferentially leucine, but not glutamic or aspartic acids.. Its function is as follows. Presumably involved in the processing and regular turnover of intracellular proteins. Catalyzes the removal of unsubstituted N-terminal amino acids from various peptides. The protein is Probable cytosol aminopeptidase of Pseudomonas putida (strain GB-1).